The primary structure comprises 460 residues: Cysteine--tRNA ligase (460 aa).

Residue cysteine 29 coordinates Zn(2+). The short motif at proline 31–asparagine 41 is the 'HIGH' region element. Zn(2+)-binding residues include cysteine 227, histidine 252, and glutamate 256. The short motif at lysine 285–serine 289 is the 'KMSKS' region element. Lysine 288 is a binding site for ATP.

This sequence belongs to the class-I aminoacyl-tRNA synthetase family. As to quaternary structure, monomer. It depends on Zn(2+) as a cofactor.

The protein localises to the cytoplasm. The enzyme catalyses tRNA(Cys) + L-cysteine + ATP = L-cysteinyl-tRNA(Cys) + AMP + diphosphate. This is Cysteine--tRNA ligase from Bradyrhizobium diazoefficiens (strain JCM 10833 / BCRC 13528 / IAM 13628 / NBRC 14792 / USDA 110).